Consider the following 541-residue polypeptide: Nucleoporin NUP57 (541 aa).

The segment covering 1 to 13 (MFGFSGSNNGFGN) has biased composition (low complexity). The tract at residues 1–261 (MFGFSGSNNG…STGSNLQQQQ (261 aa)) is disordered. 2 FG repeats span residues 2 to 3 (FG) and 11 to 12 (FG). A compositionally biased stretch (polar residues) spans 19-36 (TGFSFGQNNNNTNTQPSA). 2 FXFG repeats span residues 21–24 (FSFG) and 39–42 (FGFG). 2 FG repeats span residues 56-57 (FG) and 65-66 (FG). Residues 58–72 (ANQATNTFGSNQQSS) show a composition bias toward polar residues. The stretch at 76-79 (GLFG) is one GLFG 1 repeat. A compositionally biased stretch (low complexity) spans 83-102 (ALGSLGSSSTTASGTTATGT). GLFG repeat units follow at residues 103 to 106 (GLFG), 120 to 123 (GLFG), 132 to 135 (GLFG), and 147 to 150 (GLFG). Residues 105–116 (FGQQTAQPQQST) are compositionally biased toward polar residues. Residues 125-146 (KPTTTTGGLFGNSAQNNSTTSG) show a composition bias toward polar residues. Polar residues predominate over residues 153–172 (VGSTGSLMGGNSTQNTSNMN). GLFG repeat units lie at residues 175–178 (GLFG), 190–193 (GLFG), 204–207 (GLFG), and 220–223 (GLFG). A compositionally biased stretch (polar residues) spans 228-257 (PQTNTAPGLGNTVSTQPSFAWSKPSTGSNL). Residues 398 to 425 (ILKAQSRNVEIEKRILKLGTQLATLKNR) adopt a coiled-coil conformation.

The protein belongs to the nucleoporin GLFG family. As to quaternary structure, component of the nuclear pore complex (NPC). NPC constitutes the exclusive means of nucleocytoplasmic transport. NPCs allow the passive diffusion of ions and small molecules and the active, nuclear transport receptor-mediated bidirectional transport of macromolecules such as proteins, RNAs, ribonucleoparticles (RNPs), and ribosomal subunits across the nuclear envelope. Due to its 8-fold rotational symmetry, all subunits are present with 8 copies or multiples thereof. NUP57 is part of the NUP57 subcomplex (NIC96, NSP1, NUP49, NUP57) interacting with NUP49 and NSP1. Interacts through its FG repeats with karyopherins.

It localises to the nucleus. The protein localises to the nuclear pore complex. The protein resides in the nucleus membrane. Functionally, functions as a component of the nuclear pore complex (NPC). NPC components, collectively referred to as nucleoporins (NUPs), can play the role of both NPC structural components and of docking or interaction partners for transiently associated nuclear transport factors. Active directional transport is assured by both, a Phe-Gly (FG) repeat affinity gradient for these transport factors across the NPC and a transport cofactor concentration gradient across the nuclear envelope (GSP1 and GSP2 GTPases associated predominantly with GTP in the nucleus, with GDP in the cytoplasm). NUP57 plays an important role in several nuclear transport pathways including poly(A)+ RNA, tRNA, and pre-ribosome transport. The sequence is that of Nucleoporin NUP57 (NUP57) from Saccharomyces cerevisiae (strain ATCC 204508 / S288c) (Baker's yeast).